The sequence spans 63 residues: UPF0434 protein Mmar10_2939 (63 aa).

The protein belongs to the UPF0434 family.

The polypeptide is UPF0434 protein Mmar10_2939 (Maricaulis maris (strain MCS10) (Caulobacter maris)).